The following is a 207-amino-acid chain: Guanylate kinase (207 aa).

Positions 17 to 197 (GRLVVLAGPS…SCDELVSLLV (181 aa)) constitute a Guanylate kinase-like domain. Position 24 to 31 (24 to 31 (GPSAVGKS)) interacts with ATP.

Belongs to the guanylate kinase family.

It is found in the cytoplasm. The enzyme catalyses GMP + ATP = GDP + ADP. In terms of biological role, essential for recycling GMP and indirectly, cGMP. This is Guanylate kinase from Rhodococcus jostii (strain RHA1).